The chain runs to 66 residues: Conotoxin PnMLCL-01 (66 aa).

An N-terminal signal peptide occupies residues 1-19; it reads MLCLPVFIILLLLASPAAS. Positions 20–45 are excised as a propeptide; it reads NPLEKRIQSDLIRAALEDADTKNDPR. Position 63 is a cysteine amide (Cys-63).

It belongs to the conotoxin T superfamily. Contains 2 disulfide bonds that can be either 'C1-C3, C2-C4' or 'C1-C4, C2-C3', since these disulfide connectivities have been observed for conotoxins with cysteine framework V (for examples, see AC P0DQQ7 and AC P81755). As to expression, expressed by the venom duct.

Its subcellular location is the secreted. This chain is Conotoxin PnMLCL-01, found in Conus pennaceus (Feathered cone).